The following is a 943-amino-acid chain: Translation initiation factor IF-2 (943 aa).

Over residues Val99–Gln113 the composition is skewed to low complexity. The segment at Val99–Ala354 is disordered. The segment covering Asp117–Lys141 has biased composition (basic and acidic residues). Residues Ala145 to Thr172 show a composition bias toward low complexity. Residues Lys173 to Lys197 show a composition bias toward basic and acidic residues. A compositionally biased stretch (low complexity) spans Lys200–Glu215. Residues Gln216 to Met250 show a composition bias toward basic and acidic residues. A compositionally biased stretch (low complexity) spans Lys251–Ala264. 2 stretches are compositionally biased toward basic and acidic residues: residues Ala295–Gln308 and Gly319–Arg335. The 170-residue stretch at Pro443–Thr612 folds into the tr-type G domain. Positions Gly452–Thr459 are G1. A GTP-binding site is contributed by Gly452–Thr459. The tract at residues Gly477–His481 is G2. The G3 stretch occupies residues Asp498–Gly501. GTP is bound by residues Asp498–His502 and Asn552–Asp555. Residues Asn552 to Asp555 form a G4 region. A G5 region spans residues Ser588 to Lys590.

It belongs to the TRAFAC class translation factor GTPase superfamily. Classic translation factor GTPase family. IF-2 subfamily.

It localises to the cytoplasm. Functionally, one of the essential components for the initiation of protein synthesis. Protects formylmethionyl-tRNA from spontaneous hydrolysis and promotes its binding to the 30S ribosomal subunits. Also involved in the hydrolysis of GTP during the formation of the 70S ribosomal complex. This Neisseria gonorrhoeae (strain NCCP11945) protein is Translation initiation factor IF-2.